Reading from the N-terminus, the 629-residue chain is Long-chain-fatty-acid--AMP ligase FadD32 (629 aa).

Residues 186-191 (TSGSTR), Ser341, Ala345, Asp468, and Arg482 each bind ATP.

Belongs to the ATP-dependent AMP-binding enzyme family. Monomer.

The catalysed reaction is a long-chain fatty acid + holo-[ACP] + ATP = a long-chain fatty acyl-[ACP] + AMP + diphosphate. It catalyses the reaction dodecanoate + ATP + H(+) = dodecanoyl-AMP + diphosphate. It carries out the reaction tetradecanoate + ATP + H(+) = tetradecanoyl-AMP + diphosphate. It functions in the pathway lipid metabolism; mycolic acid biosynthesis. With respect to regulation, the acyl-AMP ligase activity is inhibited by the alkylphosphate esters of AMP, adenosine 50-dodecylphosphate (AMPC12) and eicosyl-AMP (AMPC20). Involved in the biosynthesis of mycolic acids. Catalyzes the activation of long-chain fatty acids as acyl-adenylates (acyl-AMP), which are then transferred to the phosphopantetheine arm of the polyketide synthase Pks13 for further chain extension. Can use dodecanoate (C12) and tetradecanoate (C14). The protein is Long-chain-fatty-acid--AMP ligase FadD32 (fadD32) of Mycobacterium marinum (strain ATCC BAA-535 / M).